The sequence spans 388 residues: 5-hydroxytryptamine receptor 4 (388 aa).

The Extracellular segment spans residues 1–19 (MDKLDANVSSEEGFGSVEK). Residue Asn-7 is glycosylated (N-linked (GlcNAc...) asparagine). Residues 20-44 (VVLLTFLSTVILMAILGNLLVMVAV) form a helical membrane-spanning segment. Over 45 to 54 (CWDRQLRKIK) the chain is Cytoplasmic. Residues 55-78 (TNYFIVSLAFADLLVSVLVMPFGA) traverse the membrane as a helical segment. The Extracellular segment spans residues 79–92 (IELVQDIWIYGEVF). The helical transmembrane segment at 93–117 (CLVRTSLDVLLTTASIFHLCCISLD) threads the bilayer. Cys-93 and Cys-184 form a disulfide bridge. Asp-100 is a binding site for serotonin. Topologically, residues 118-133 (RYYAICCQPLVYRNKM) are cytoplasmic. The chain crosses the membrane as a helical span at residues 134-157 (TPLRIALMLGGCWVIPTFISFLPI). Over 158-188 (MQGWNNIGIIDLIEKRKFNQNSNSTYCVFMV) the chain is Extracellular. A helical membrane pass occupies residues 189-212 (NKPYAITCSVVAFYIPFLLMVLAY). The Cytoplasmic segment spans residues 213–257 (YRIYVTAKEHAHQIQMLQRAGASSESRPQSADQHSTHRMRTETKA). Residues 258–283 (AKTLCIIMGCFCLCWAPFFVTNIVDP) form a helical membrane-spanning segment. Asn-279 lines the serotonin pocket. The Extracellular portion of the chain corresponds to 284–290 (FIDYTVP). The chain crosses the membrane as a helical span at residues 291–314 (GQVWTAFLWLGYINSGLNPFLYAF). The Cytoplasmic segment spans residues 315-388 (LNKSFRRAFL…PLVAAQPSDT (74 aa)).

This sequence belongs to the G-protein coupled receptor 1 family. As to quaternary structure, interacts (via C-terminus 330-346 AA) with GRK5; this interaction is promoted by 5-HT (serotonin). Interacts with MAGI2, MPP3, NHERF1 and SNX27 isoforms 1 and 2. Forms a complex including NHERF1 and EZR. In terms of assembly, interacts with PATJ, NOS1 and SEC23A. Expressed in ileum, brain, and atrium, but not in the ventricle. As to expression, mainly expressed in atria and cardiac ventricle. In terms of tissue distribution, expressed in all cardiovascular tissues analyzed.

The protein resides in the cell membrane. It localises to the endosome membrane. Its function is as follows. G-protein coupled receptor for 5-hydroxytryptamine (serotonin), a biogenic hormone that functions as a neurotransmitter, a hormone and a mitogen. Ligand binding causes a conformation change that triggers signaling via guanine nucleotide-binding proteins (G proteins) and modulates the activity of downstream effectors. HTR4 is coupled to G(s) G alpha proteins and mediates activation of adenylate cyclase activity. This chain is 5-hydroxytryptamine receptor 4, found in Homo sapiens (Human).